The chain runs to 33 residues: MNLEVIAQLTVLALIVISGPLVIALSAARKGNL.

The chain crosses the membrane as a helical span at residues 5–25 (VIAQLTVLALIVISGPLVIAL).

This sequence belongs to the Psb30/Ycf12 family. PSII is composed of 1 copy each of membrane proteins PsbA, PsbB, PsbC, PsbD, PsbE, PsbF, PsbH, PsbI, PsbJ, PsbK, PsbL, PsbM, PsbT, PsbX, PsbY, PsbZ, Psb30/Ycf12, peripheral proteins of the oxygen-evolving complex and a large number of cofactors. It forms dimeric complexes.

It localises to the plastid. It is found in the chloroplast thylakoid membrane. A core subunit of photosystem II (PSII), probably helps stabilize the reaction center. The sequence is that of Photosystem II reaction center protein Psb30 from Huperzia lucidula (Shining clubmoss).